The primary structure comprises 192 residues: Signal peptidase complex subunit 2 (192 aa).

The Cytoplasmic portion of the chain corresponds to 1–46; it reads MEEKKTESTNKNVKKANLLDHHSIKHILDESVSDIVTSRGYKEDVR. The chain crosses the membrane as a helical span at residues 47 to 69; sequence LSNLKLILGTIIIVVALVAQFYN. At 70 to 78 the chain is on the lumenal side; that stretch reads KKFPENRDF. A helical membrane pass occupies residues 79-98; it reads LIGCIALYVVLNAVLQLILY. Residues 99 to 192 lie on the Cytoplasmic side of the membrane; that stretch reads TKEKNAILFT…YAEEEPKKKK (94 aa).

This sequence belongs to the SPCS2 family. Component of the signal peptidase complex (SPC) composed of a catalytic subunit SEC11 and three accessory subunits SPCS1, SPCS2 and SPCS3. The complex induces a local thinning of the ER membrane which is used to measure the length of the signal peptide (SP) h-region of protein substrates. This ensures the selectivity of the complex towards h-regions shorter than 18-20 amino acids.

It localises to the endoplasmic reticulum membrane. Component of the signal peptidase complex (SPC) which catalyzes the cleavage of N-terminal signal sequences from nascent proteins as they are translocated into the lumen of the endoplasmic reticulum. Enhances the enzymatic activity of SPC and facilitates the interactions between different components of the translocation site. This is Signal peptidase complex subunit 2 from Arabidopsis thaliana (Mouse-ear cress).